The following is a 156-amino-acid chain: Snaclec A10 (156 aa).

Residues 1-23 (MGRSISVSFGLLVVFLSLSGIGA) form the signal peptide. 3 cysteine pairs are disulfide-bonded: cysteine 27-cysteine 38, cysteine 55-cysteine 154, and cysteine 129-cysteine 146. The C-type lectin domain maps to 34 to 155 (YDQHCYQAVD…CGQPYRFTCE (122 aa)).

This sequence belongs to the snaclec family. In terms of assembly, heterodimer; disulfide-linked. Expressed by the venom gland.

The protein resides in the secreted. Functionally, interferes with one step of hemostasis (modulation of platelet aggregation, or coagulation cascade, for example). The chain is Snaclec A10 from Macrovipera lebetinus (Levantine viper).